Reading from the N-terminus, the 408-residue chain is UDP-N-acetylglucosamine--N-acetylmuramyl-(pentapeptide) pyrophosphoryl-undecaprenol N-acetylglucosamine transferase (408 aa).

Residues 1–20 (MNDTVKKPTGGRGDDPLPAG) form a disordered region. UDP-N-acetyl-alpha-D-glucosamine-binding positions include 41 to 43 (TAG), asparagine 160, arginine 197, serine 231, and glutamine 327.

The protein belongs to the glycosyltransferase 28 family. MurG subfamily.

It localises to the cell membrane. It catalyses the reaction di-trans,octa-cis-undecaprenyl diphospho-N-acetyl-alpha-D-muramoyl-L-alanyl-D-glutamyl-meso-2,6-diaminopimeloyl-D-alanyl-D-alanine + UDP-N-acetyl-alpha-D-glucosamine = di-trans,octa-cis-undecaprenyl diphospho-[N-acetyl-alpha-D-glucosaminyl-(1-&gt;4)]-N-acetyl-alpha-D-muramoyl-L-alanyl-D-glutamyl-meso-2,6-diaminopimeloyl-D-alanyl-D-alanine + UDP + H(+). Its pathway is cell wall biogenesis; peptidoglycan biosynthesis. Its function is as follows. Cell wall formation. Catalyzes the transfer of a GlcNAc subunit on undecaprenyl-pyrophosphoryl-MurNAc-pentapeptide (lipid intermediate I) to form undecaprenyl-pyrophosphoryl-MurNAc-(pentapeptide)GlcNAc (lipid intermediate II). The sequence is that of UDP-N-acetylglucosamine--N-acetylmuramyl-(pentapeptide) pyrophosphoryl-undecaprenol N-acetylglucosamine transferase from Mycolicibacterium paratuberculosis (strain ATCC BAA-968 / K-10) (Mycobacterium paratuberculosis).